Consider the following 92-residue polypeptide: YcgL domain-containing protein Sbal_1869 (92 aa).

The 85-residue stretch at methionine 1–lysine 85 folds into the YcgL domain.

The chain is YcgL domain-containing protein Sbal_1869 from Shewanella baltica (strain OS155 / ATCC BAA-1091).